Here is a 308-residue protein sequence, read N- to C-terminus: Ribosomal RNA large subunit methyltransferase F (308 aa).

The protein belongs to the methyltransferase superfamily. METTL16/RlmF family.

Its subcellular location is the cytoplasm. It catalyses the reaction adenosine(1618) in 23S rRNA + S-adenosyl-L-methionine = N(6)-methyladenosine(1618) in 23S rRNA + S-adenosyl-L-homocysteine + H(+). Functionally, specifically methylates the adenine in position 1618 of 23S rRNA. This chain is Ribosomal RNA large subunit methyltransferase F, found in Shigella dysenteriae serotype 1 (strain Sd197).